A 104-amino-acid polypeptide reads, in one-letter code: MNQQRLTQVILAPIVSEKSNVLAEKRNQMTFKVLANATKPEIKAAVELLFGVQVADVTTVTIKGKVKRFGRTLGRRSDVKKAYVSLAAGQELDLEAAAAAADKE.

The protein belongs to the universal ribosomal protein uL23 family. As to quaternary structure, part of the 50S ribosomal subunit. Contacts protein L29, and trigger factor when it is bound to the ribosome.

Functionally, one of the early assembly proteins it binds 23S rRNA. One of the proteins that surrounds the polypeptide exit tunnel on the outside of the ribosome. Forms the main docking site for trigger factor binding to the ribosome. The polypeptide is Large ribosomal subunit protein uL23 (Neisseria meningitidis serogroup B (strain ATCC BAA-335 / MC58)).